Here is a 305-residue protein sequence, read N- to C-terminus: Uridylate-specific endoribonuclease D (305 aa).

Residues 1–17 form the signal peptide; it reads MKVYFVFLCLLPSLISG. Positions 33–305 constitute an EndoU domain; the sequence is SNAEIQSLAE…RYVASSYPNI (273 aa). Residues histidine 182, histidine 197, and lysine 240 contribute to the active site. Asparagine 288 is a glycosylation site (N-linked (GlcNAc...) asparagine).

The protein belongs to the ENDOU family. In terms of assembly, monomer. Requires Mn(2+) as cofactor.

It is found in the secreted. The catalysed reaction is ribonucleotidyl-uridine-RNA = a 5'-end dephospho-uridine-RNA + a 3'-end 2',3'-cyclophospho-ribonucleotide-RNA. In terms of biological role, endoribonuclease that cleaves single-stranded RNAs at 5' of uridylates and releases a product with a 2',3'-cyclic phosphate at the 3'-end. This chain is Uridylate-specific endoribonuclease D (endou-d), found in Xenopus laevis (African clawed frog).